The sequence spans 39 residues: Colipase (39 aa).

Disulfide bonds link Cys16-Cys27 and Cys22-Cys38.

Belongs to the colipase family. Forms a 1:1 stoichiometric complex with pancreatic lipase. In terms of tissue distribution, expressed by the pancreas.

It localises to the secreted. Functionally, colipase is a cofactor of pancreatic lipase. It allows the lipase to anchor itself to the lipid-water interface. Without colipase the enzyme is washed off by bile salts, which have an inhibitory effect on the lipase. This chain is Colipase, found in Squalus acanthias (Spiny dogfish).